The primary structure comprises 275 residues: Diaminopimelate epimerase (275 aa).

Positions 12, 45, and 65 each coordinate substrate. Residue cysteine 74 is the Proton donor of the active site. Substrate-binding positions include 75–76 (GN), asparagine 158, asparagine 191, and 209–210 (ER). The active-site Proton acceptor is the cysteine 218. 219–220 (GT) provides a ligand contact to substrate.

It belongs to the diaminopimelate epimerase family. As to quaternary structure, homodimer.

Its subcellular location is the cytoplasm. The catalysed reaction is (2S,6S)-2,6-diaminopimelate = meso-2,6-diaminopimelate. The protein operates within amino-acid biosynthesis; L-lysine biosynthesis via DAP pathway; DL-2,6-diaminopimelate from LL-2,6-diaminopimelate: step 1/1. Functionally, catalyzes the stereoinversion of LL-2,6-diaminopimelate (L,L-DAP) to meso-diaminopimelate (meso-DAP), a precursor of L-lysine and an essential component of the bacterial peptidoglycan. The polypeptide is Diaminopimelate epimerase (Shewanella putrefaciens (strain CN-32 / ATCC BAA-453)).